Reading from the N-terminus, the 161-residue chain is Ribosome maturation factor RimP (161 aa).

The protein belongs to the RimP family.

The protein resides in the cytoplasm. Its function is as follows. Required for maturation of 30S ribosomal subunits. The sequence is that of Ribosome maturation factor RimP from Myxococcus xanthus (strain DK1622).